The primary structure comprises 652 residues: Sodium-dependent phosphate transporter 1-A (652 aa).

Residues methionine 1–aspartate 25 are Cytoplasmic-facing. The helical transmembrane segment at valine 26–alanine 46 threads the bilayer. The Extracellular segment spans residues asparagine 47–glutamine 66. A helical membrane pass occupies residues alanine 67 to serine 87. Over glutamate 88–glutamate 104 the chain is Cytoplasmic. A helical transmembrane segment spans residues alanine 105–alanine 125. Over serine 126–arginine 162 the chain is Extracellular. The helical transmembrane segment at isoleucine 163–tyrosine 183 threads the bilayer. Residues phenylalanine 184 to arginine 201 are Cytoplasmic-facing. The chain crosses the membrane as a helical span at residues alanine 202–glycine 222. At alanine 223 to tryptophan 234 the chain is on the extracellular side. The helical transmembrane segment at glycine 235 to valine 255 threads the bilayer. At cysteine 256–glutamate 482 the chain is on the cytoplasmic side. A disordered region spans residues threonine 278–proline 308. Basic and acidic residues predominate over residues valine 281–proline 295. Residues proline 297 to proline 308 are compositionally biased toward pro residues. A helical transmembrane segment spans residues valine 483–glycine 503. Residues glycine 504–proline 531 are Extracellular-facing. Residues threonine 532–glycine 552 form a helical membrane-spanning segment. Residues arginine 553–glycine 571 lie on the Cytoplasmic side of the membrane. Residues phenylalanine 572 to valine 592 traverse the membrane as a helical segment. Topologically, residues serine 593–asparagine 621 are extracellular. A helical transmembrane segment spans residues isoleucine 622–alanine 642. Topologically, residues leucine 643–threonine 652 are cytoplasmic.

It belongs to the inorganic phosphate transporter (PiT) (TC 2.A.20) family.

Its subcellular location is the membrane. In terms of biological role, sodium-phosphate symporter which plays a fundamental housekeeping role in phosphate transport. The chain is Sodium-dependent phosphate transporter 1-A (slc20a1a) from Danio rerio (Zebrafish).